The primary structure comprises 209 residues: Interleukin-6 (209 aa).

An N-terminal signal peptide occupies residues Arg1–Pro26. Positions Pro28–Pro47 are disordered. Cysteines 69 and 75 form a disulfide. Position 78 is a phosphoserine (Ser78). A disulfide bridge links Cys98 with Cys108.

It belongs to the IL-6 superfamily. Component of a hexamer of two molecules each of IL6, IL6R and IL6ST; first binds to IL6R to associate with the signaling subunit IL6ST. Interacts with IL6R (via the N-terminal ectodomain); this interaction may be affected by IL6R-binding with SORL1, hence decreasing IL6 cis signaling. Interacts with SORL1 (via the N-terminal ectodomain); this interaction leads to IL6 internalization and lysosomal degradation. May form a trimeric complex with the soluble SORL1 ectodomain and soluble IL6R receptor; this interaction might stabilize circulating IL6, hence promoting IL6 trans signaling.

The protein resides in the secreted. Functionally, cytokine with a wide variety of biological functions in immunity, tissue regeneration, and metabolism. Binds to IL6R, then the complex associates to the signaling subunit IL6ST/gp130 to trigger the intracellular IL6-signaling pathway. The interaction with the membrane-bound IL6R and IL6ST stimulates 'classic signaling', whereas the binding of IL6 and soluble IL6R to IL6ST stimulates 'trans-signaling'. Alternatively, 'cluster signaling' occurs when membrane-bound IL6:IL6R complexes on transmitter cells activate IL6ST receptors on neighboring receiver cells. IL6 is a potent inducer of the acute phase response. Rapid production of IL6 contributes to host defense during infection and tissue injury, but excessive IL6 synthesis is involved in disease pathology. In the innate immune response, is synthesized by myeloid cells, such as macrophages and dendritic cells, upon recognition of pathogens through toll-like receptors (TLRs) at the site of infection or tissue injury. In the adaptive immune response, is required for the differentiation of B cells into immunoglobulin-secreting cells. Plays a major role in the differentiation of CD4(+) T cell subsets. Essential factor for the development of T follicular helper (Tfh) cells that are required for the induction of germinal-center formation. Required to drive naive CD4(+) T cells to the Th17 lineage. Also required for proliferation of myeloma cells and the survival of plasmablast cells. Its function is as follows. Acts as an essential factor in bone homeostasis and on vessels directly or indirectly by induction of VEGF, resulting in increased angiogenesis activity and vascular permeability. Induces, through 'trans-signaling' and synergistically with IL1B and TNF, the production of VEGF. Involved in metabolic controls, is discharged into the bloodstream after muscle contraction increasing lipolysis and improving insulin resistance. 'Trans-signaling' in central nervous system also regulates energy and glucose homeostasis. Mediates, through GLP-1, crosstalk between insulin-sensitive tissues, intestinal L cells and pancreatic islets to adapt to changes in insulin demand. Also acts as a myokine. Plays a protective role during liver injury, being required for maintenance of tissue regeneration. Also has a pivotal role in iron metabolism by regulating HAMP/hepcidin expression upon inflammation or bacterial infection. Through activation of IL6ST-YAP-NOTCH pathway, induces inflammation-induced epithelial regeneration. This chain is Interleukin-6 (IL6), found in Phoca vitulina (Harbor seal).